The sequence spans 277 residues: Methyltransferase str3 (277 aa).

This sequence belongs to the methyltransferase superfamily. LaeA methyltransferase family.

The protein operates within mycotoxin biosynthesis. In terms of biological role, methyltransferase; part of the gene cluster that mediates the biosynthesis of strobilurin A, an antifungal polyketide that contains a key beta-methoxyacrylate toxophore that targets the complex III of the mitochondrial electron transport chain. Strobilurin biosynthesis begins with construction of benzoyl CoA by step-wise elimination of ammonia from phenylalanine by the phenylalanine ammonia-lyase str11, oxygenation by str8 and retro-Claisen reaction to form benzoic acid, which is activated to its CoA thiolester benzoyl CoA by the dedicated CoA ligase str10. Benzoyl CoA forms the starter unit for the highly reducing polyketide synthase stpks1 that produces the polyketide prestrobilutin A. The FAD-dependent oxygenase str9 then catalyzes the key oxidative rearrangement responsible for the creation of the beta-methoxyacrylate toxophore. Str9 performs epoxidation of the 2,3 olefin of prestrobilutin A, followed by Meinwald rearrangement to furnish the aldehyde intermediate. Rapid enolization of the aldehyde intermediate would give the beta-methoxyacrylate skeleton and methylations catalyzed by str2 and str3 complete the synthesis and lead to the production of strobilurin A. The short-chain dehydrogenase stl2 and the dehydrogenase str4 play a role in the shunt pathway leading to the production of bolineol. The cluster encodes no obvious halogenase gene that could be involved in production of strobilurin B, nor any obvious dimethylallyl-transferase that could be involved in the production of strobilurin G. It is possible that unknown proteins encoded in, or near, the cluster (such as str1 or stl1) may form new classes of halogenases or dimethylally-transferases, or that the responsible genes are located elsewhere on the genome. Similarly, proteins encoded by str5/str6 hydrolases appear to have no chemical role in the biosynthesis of strobilurin A. Finally, no obvious self-resistance gene is found within the cluster. The sequence is that of Methyltransferase str3 from Strobilurus tenacellus.